Consider the following 241-residue polypeptide: Probable transcriptional regulatory protein Daro_4067 (241 aa).

Positions 1–22 (MAGHSKWANIQHRKGRQDEKRG) are disordered.

Belongs to the TACO1 family.

It localises to the cytoplasm. This Dechloromonas aromatica (strain RCB) protein is Probable transcriptional regulatory protein Daro_4067.